Reading from the N-terminus, the 503-residue chain is WD repeat-containing protein 55 homolog (503 aa).

2 disordered regions span residues 1 to 21 (MHTH…DLDD) and 35 to 132 (ALVG…DDLD). 3 stretches are compositionally biased toward acidic residues: residues 12-21 (DADELDDLDD), 40-50 (DVSDSDIDEHD), and 78-96 (NAED…DEAE). WD repeat units lie at residues 157 to 196 (KLED…NKLL), 201 to 242 (VHSK…KLYE), 244 to 282 (AHDD…PIFE), 285 to 324 (EVED…LYVQ), 327 to 366 (PYEE…YHCD), and 411 to 450 (QHNM…DFGD). A disordered region spans residues 483 to 503 (TKEDEDNADNNDAAAGPSNSA).

Belongs to the WD repeat WDR55 family.

The polypeptide is WD repeat-containing protein 55 homolog (Drosophila persimilis (Fruit fly)).